The sequence spans 765 residues: Probable serine/threonine-protein kinase DDB_G0271402 (765 aa).

In terms of domain architecture, Protein kinase spans 35-328 (LEFGQEIGKG…KEITERLKSL (294 aa)). Residues 41–49 (IGKGAYGKI) and K62 contribute to the ATP site. The active-site Proton acceptor is D192. Disordered stretches follow at residues 371-393 (IVHN…NNSN), 443-477 (SMGD…KIIN), 491-527 (SSDL…NNNS), 545-620 (PIQI…QQYQ), 654-684 (PLNI…HHHL), 699-738 (IISS…PTNI), and 746-765 (ASNS…TVQS). Over residues 446–458 (DESDLDSDDEDDS) the composition is skewed to acidic residues. Composition is skewed to low complexity over residues 459-470 (YTSSASSSRCNS), 499-527 (NGNN…NNNS), 562-605 (PPTS…PKSN), 662-678 (NNNN…GNVN), and 699-720 (IISS…SLTS).

This sequence belongs to the protein kinase superfamily. TKL Ser/Thr protein kinase family.

The enzyme catalyses L-seryl-[protein] + ATP = O-phospho-L-seryl-[protein] + ADP + H(+). It carries out the reaction L-threonyl-[protein] + ATP = O-phospho-L-threonyl-[protein] + ADP + H(+). The polypeptide is Probable serine/threonine-protein kinase DDB_G0271402 (Dictyostelium discoideum (Social amoeba)).